Here is a 396-residue protein sequence, read N- to C-terminus: L-lactate dehydrogenase (396 aa).

An FMN hydroxy acid dehydrogenase domain is found at methionine 1–serine 380. Tyrosine 24 is a substrate binding site. FMN contacts are provided by serine 106 and glutamine 127. Tyrosine 129 lines the substrate pocket. An FMN-binding site is contributed by threonine 155. A substrate-binding site is contributed by arginine 164. Lysine 251 is an FMN binding site. Residue histidine 275 is the Proton acceptor of the active site. Residue arginine 278 participates in substrate binding. Residue aspartate 306 to arginine 330 participates in FMN binding.

It belongs to the FMN-dependent alpha-hydroxy acid dehydrogenase family. FMN is required as a cofactor.

Its subcellular location is the cell inner membrane. The enzyme catalyses (S)-lactate + A = pyruvate + AH2. Its function is as follows. Catalyzes the conversion of L-lactate to pyruvate. Is coupled to the respiratory chain. The protein is L-lactate dehydrogenase of Escherichia coli (strain SMS-3-5 / SECEC).